Reading from the N-terminus, the 438-residue chain is GTPase Der (438 aa).

EngA-type G domains follow at residues 4–168 (PIVA…PEGN) and 177–352 (IRIA…GNYC). Residues 10 to 17 (GRPNVGKS), 57 to 61 (DTGGI), 120 to 123 (NKID), 183 to 190 (GRPNVGKS), 230 to 234 (DTAGL), and 295 to 298 (NKWD) each bind GTP. Residues 353–437 (KRIKTGILND…GIKLEFRERK (85 aa)) form the KH-like domain.

It belongs to the TRAFAC class TrmE-Era-EngA-EngB-Septin-like GTPase superfamily. EngA (Der) GTPase family. Associates with the 50S ribosomal subunit.

GTPase that plays an essential role in the late steps of ribosome biogenesis. This is GTPase Der from Clostridium novyi (strain NT).